We begin with the raw amino-acid sequence, 1392 residues long: Leucine-rich PPR motif-containing protein, mitochondrial (1392 aa).

Residues 1–59 (MAALLRPARWLLGAAAAPRLPLSLRLPAGVPGRLSSVVRVAAVGSRPAAGERLSQARLY) constitute a mitochondrion transit peptide. 14 PPR repeats span residues 125-159 (LLRS…GVVY), 160-194 (DVSH…NIQP), 195-229 (NRVT…DLPI), 230-264 (TEAV…GIEP), 265-299 (GPDT…DHYF), 300-334 (MDRD…RRSI), 402-436 (HSSS…GFPI), 437-471 (RPHY…GVDP), 677-708 (VGSA…ESDM), 709-745 (VIGG…SAIL), 746-783 (DTAK…IKDA), 784-820 (TVLS…AKPS), 821-856 (SNIS…VLPR), and 953-987 (RDQM…NIIP). Residues Lys151, Lys186, and Lys225 each carry the N6-acetyllysine modification. The residue at position 291 (Lys291) is an N6-acetyllysine. Lys462 carries the N6-acetyllysine modification. Lys749 is subject to N6-acetyllysine. Residues 931 to 1050 (ASNQVEALEK…NCKLKKSKDA (120 aa)) are RNA-binding. Phosphoserine occurs at positions 1025, 1026, and 1028. 6 PPR repeats span residues 1030 to 1064 (GEDV…NVVF), 1065 to 1101 (SSET…GFTL), 1102 to 1136 (NDAA…KQVP), 1137 to 1175 (SQIA…LSKM), 1176 to 1210 (VFIN…QAIE), and 1315 to 1349 (NDKV…NLKL). Ser1137 is subject to Phosphoserine.

As to quaternary structure, component of mRNP complexes associated with HNRPA1. Component of the complex, at least composed of LRPPRC, BECN1 and BCL2; the interactions prevent BECN1 from forming an autophagy-inducing complex with PIK3C3. Interacts with CECR2, HEBP2, MAP1S and UXT. Interacts with PPARGC1A. Interacts with FOXO1. Interacts (via N-terminus) with EIF4E; the interaction promotes association of EIF4E with 4ESE-containing mRNAs. Interacts with exportin XPO1/CRM1; interacts both alone and in complex with EIF4E and 4ESE-containing mRNAs to form an EIF4E-dependent mRNA export complex. Interacts with importin IPO8; the interaction occurs when LRPPRC is in its RNA-free form and returns LRPPRC to the nucleus for further export rounds. Interacts with BECN1. Strongly expressed in heart, liver and kidney. Weakly expressed in brain, skeletal muscle and testes.

The protein resides in the mitochondrion. The protein localises to the nucleus. Its subcellular location is the nucleoplasm. It is found in the nucleus inner membrane. It localises to the nucleus outer membrane. In terms of biological role, may play a role in RNA metabolism in both nuclei and mitochondria. In the nucleus binds to HNRPA1-associated poly(A) mRNAs and is part of nmRNP complexes at late stages of mRNA maturation which are possibly associated with nuclear mRNA export. Positively modulates nuclear export of mRNAs containing the EIF4E sensitivity element (4ESE) by binding simultaneously to both EIF4E and the 4ESE and acting as a platform for assembly for the RNA export complex. Also binds to exportin XPO1/CRM1 to engage the nuclear pore and traffic the bound mRNAs to the cytoplasm. May bind mature mRNA in the nucleus outer membrane. In mitochondria binds to poly(A) mRNA. Plays a role in translation or stability of mitochondrially encoded cytochrome c oxidase (COX) subunits. May be involved in transcription regulation. Cooperates with PPARGC1A to regulate certain mitochondrially encoded genes and gluconeogenic genes and may regulate docking of PPARGC1A to transcription factors. Seems to be involved in the transcription regulation of the multidrug-related genes MDR1 and MVP. Part of a nuclear factor that binds to the invMED1 element of MDR1 and MVP gene promoters. Binds single-stranded DNA. Required for maintaining mitochondrial potential. Suppresses the initiation of basal levels of autophagy and mitophagy by sustaining BCL2 levels. In Mus musculus (Mouse), this protein is Leucine-rich PPR motif-containing protein, mitochondrial (Lrpprc).